The sequence spans 745 residues: ATP-dependent zinc metalloprotease FtsH (745 aa).

The Cytoplasmic portion of the chain corresponds to 1–11; the sequence is MNNRRNGLFRN. A helical transmembrane segment spans residues 12-32; it reads SLFYILMFLSLMGIIYFFFGG. Residues 33–131 are Extracellular-facing; sequence NSGSQTQNIR…VTAKAEESSG (99 aa). Residues 132 to 152 traverse the membrane as a helical segment; it reads IWVTLLMYIAPVILMLFLFYM. The Cytoplasmic portion of the chain corresponds to 153-745; that stretch reads MMGQAGQGGG…SSQDDTNSQA (593 aa). 227-234 is an ATP binding site; it reads GPPGTGKT. His449 lines the Zn(2+) pocket. The active site involves Glu450. Residues His453 and Asp525 each contribute to the Zn(2+) site. The span at 630–673 shows a compositional bias: basic and acidic residues; sequence MPEKDSNEFPSEKAATFEESKRELERREAEKHAQNQSADDKQAD. The segment at 630–745 is disordered; sequence MPEKDSNEFP…SSQDDTNSQA (116 aa). Residues 690 to 704 are compositionally biased toward low complexity; it reads SESDASSEVSADSSV. The segment covering 705 to 745 has biased composition (polar residues); it reads NSTANSATESATDSDVATSATGLPNAESATPSSQDDTNSQA.

In the central section; belongs to the AAA ATPase family. This sequence in the C-terminal section; belongs to the peptidase M41 family. In terms of assembly, homohexamer. The cofactor is Zn(2+).

It is found in the cell membrane. Its function is as follows. Acts as a processive, ATP-dependent zinc metallopeptidase for both cytoplasmic and membrane proteins. Plays a role in the quality control of integral membrane proteins. This Lactiplantibacillus plantarum (strain ATCC BAA-793 / NCIMB 8826 / WCFS1) (Lactobacillus plantarum) protein is ATP-dependent zinc metalloprotease FtsH.